The sequence spans 681 residues: SRSF protein kinase 2 (681 aa).

Residues 1 to 63 (MSVNSEKSSS…EQEDPADYCK (63 aa)) form a disordered region. Positions 22–41 (LVPPPPPPPPPPPLPDPAPP) are enriched in pro residues. The segment covering 42–59 (EPEEEILGSDDEEQEDPA) has biased composition (acidic residues). S50 is subject to Phosphoserine. Positions 79-681 (YHVIRKLGWG…ECLRHPWLNS (603 aa)) constitute a Protein kinase domain. ATP is bound by residues 85-93 (LGWGHFSTV) and K108. D212 functions as the Proton acceptor in the catalytic mechanism. Disordered regions lie at residues 237-270 (WQKA…KKKL), 302-452 (ENIT…PLFS), and 467-499 (GSPL…KTKT). Phosphothreonine occurs at positions 331 and 332. The residue at position 378 (S378) is a Phosphoserine. A compositionally biased stretch (acidic residues) spans 395-419 (QLEDEEDDEDDCANPEEYNLDEPNA). The segment covering 421-431 (SDYTYSSSYEQ) has biased composition (polar residues). Residue S468 is modified to Phosphoserine. A Phosphothreonine modification is found at T471. S477, S479, and S483 each carry phosphoserine. Residue T485 is modified to Phosphothreonine; by PKB/AKT1. Phosphoserine is present on residues S487 and S490. Residue S581 is modified to Phosphoserine; by CK2.

The protein belongs to the protein kinase superfamily. CMGC Ser/Thr protein kinase family. In terms of assembly, associates with U4/U6-U5 tri-small nuclear ribonucleoproteins (U4/U6-U5 tri-snRNPs). Interacts with PKB/AKT1 in a phosphorylation-dependent manner. The phosphorylated form (by PKB/AKT1) interacts with YWHAB and YWHAE. Interaction with YWHAB suppresses its cleavage by caspases and inhibits the release of its N-terminal pro-apoptotic fragment. Interacts with SFN. Interacts with ACIN1. Interacts with POLR2A/RNA polymerase II; the interaction occurs during the co-transcriptional formation of inappropriate R-loops. Requires Mg(2+) as cofactor. Phosphorylation at Thr-485 by PKB/AKT1 enhances its stimulatory activity in triggering cyclin-D1 (CCND1) expression and promoting apoptosis in neurons, which can be blocked by YWHAB. It also enhances its protein kinase activity toward ACIN1 and SRSF2, promotes its nuclear translocation and prevents its proteolytic cleavage. Post-translationally, proteolytically cleaved at Asp-137 and Asp-401 by caspase-3 during apoptotic cell death. Cleavage at Asp-137 which is the major site of cleavage, produces a small N-terminal fragment that translocates into nucleus and promotes VP16-induced apoptosis. As to expression, expressed in testes, lung and brain.

It localises to the cytoplasm. It is found in the nucleus. The protein localises to the nucleoplasm. Its subcellular location is the nucleus speckle. The protein resides in the chromosome. It carries out the reaction L-seryl-[protein] + ATP = O-phospho-L-seryl-[protein] + ADP + H(+). The enzyme catalyses L-threonyl-[protein] + ATP = O-phospho-L-threonyl-[protein] + ADP + H(+). With respect to regulation, activated by phosphorylation on Ser-50 and Ser-581. Its function is as follows. Serine/arginine-rich protein-specific kinase which specifically phosphorylates its substrates at serine residues located in regions rich in arginine/serine dipeptides, known as RS domains and is involved in the phosphorylation of SR splicing factors and the regulation of splicing. Promotes neuronal apoptosis by up-regulating cyclin-D1 (CCND1) expression. This is done by the phosphorylation of SRSF2, leading to the suppression of p53/TP53 phosphorylation thereby relieving the repressive effect of p53/TP53 on cyclin-D1 (CCND1) expression. Phosphorylates ACIN1, and redistributes it from the nuclear speckles to the nucleoplasm, resulting in cyclin A1 but not cyclin A2 up-regulation. Plays an essential role in spliceosomal B complex formation via the phosphorylation of DDX23/PRP28. Probably by phosphorylating DDX23, leads to the suppression of incorrect R-loops formed during transcription; R-loops are composed of a DNA:RNA hybrid and the associated non-template single-stranded DNA. The protein is SRSF protein kinase 2 of Mus musculus (Mouse).